The sequence spans 293 residues: 4-diphosphocytidyl-2-C-methyl-D-erythritol kinase (293 aa).

Lys16 is a catalytic residue. Pro99 to Ser109 contacts ATP. Residue Asp141 is part of the active site.

It belongs to the GHMP kinase family. IspE subfamily.

The catalysed reaction is 4-CDP-2-C-methyl-D-erythritol + ATP = 4-CDP-2-C-methyl-D-erythritol 2-phosphate + ADP + H(+). Its pathway is isoprenoid biosynthesis; isopentenyl diphosphate biosynthesis via DXP pathway; isopentenyl diphosphate from 1-deoxy-D-xylulose 5-phosphate: step 3/6. Its function is as follows. Catalyzes the phosphorylation of the position 2 hydroxy group of 4-diphosphocytidyl-2C-methyl-D-erythritol. The sequence is that of 4-diphosphocytidyl-2-C-methyl-D-erythritol kinase from Burkholderia thailandensis (strain ATCC 700388 / DSM 13276 / CCUG 48851 / CIP 106301 / E264).